The following is a 3051-amino-acid chain: Biorientation of chromosomes in cell division protein 1-like 1 (3051 aa).

The span at 1-33 shows a compositional bias: pro residues; the sequence is MATNPQPQPPPPAPPPPPPQPQPQPPPPPPGPG. Disordered stretches follow at residues 1-47, 164-197, 215-288, 301-393, and 411-469; these read MATN…AGAG, HKEEGSGNTAPDDEKPDTSLITQGVPTPGPSANV, ASAA…CPVE, ILLN…KEDF, and VHTS…VRHA. Over residues 34–47 the composition is skewed to gly residues; the sequence is AGPGAGGAGGAGAG. The span at 215 to 227 shows a compositional bias: low complexity; it reads ASAARASTETSNA. The span at 246 to 263 shows a compositional bias: basic and acidic residues; the sequence is STDKERTSEDMADKEKST. At Ser-266 the chain carries Phosphoserine. The span at 312–393 shows a compositional bias: basic and acidic residues; it reads SEQKNKSTDK…KTVEGTKEDF (82 aa). Positions 418–443 are enriched in acidic residues; that stretch reads SFEEDTEEEVVTSDSMEEGEITSDDE. N6-acetyllysine is present on Lys-473. 2 positions are modified to phosphoserine: Ser-482 and Ser-484. Composition is skewed to basic and acidic residues over residues 497 to 527, 549 to 570, and 580 to 653; these read IAKEKEERLLRRQINREKLEEKRKQKAEKTK, LEPKAARIKEVLKERKVLEKKV, and SRNV…LERE. The disordered stretch occupies residues 497 to 1203; it reads IAKEKEERLL…EKHADHRSTL (707 aa). A phosphoserine mark is found at Ser-635 and Ser-659. Residues Thr-660 and Thr-733 each carry the phosphothreonine modification. Basic and acidic residues-rich tracts occupy residues 671–772, 804–852, 866–878, 940–966, 984–1021, and 1028–1075; these read TDTR…EENI, KDGK…KIQK, RRSESYSEDKCDM, KPDKEKNTEENDSEKQRKSKVEDKPFE, TQKDSSHRAKLPLAKEKYKSDKDSTSTRLERKLSDGHK, and SSKD…ENRR. Ser-1077 bears the Phosphoserine mark. Composition is skewed to polar residues over residues 1092-1103 and 1135-1148; these read NTLSTPSGSSLQ and SKTQDNRNNNSQQD. Phosphoserine is present on residues Ser-1145 and Ser-1318. Thr-1354 bears the Phosphothreonine mark. Disordered regions lie at residues 1456–1550, 1700–1725, and 1760–1890; these read KLKH…QSEV, GSISSEEVDGSQGNMMRMGPKKETEG, and VVLG…TGLG. Basic and acidic residues predominate over residues 1465-1479; sequence KVKDISIDVERRNEN. A compositionally biased stretch (polar residues) spans 1482 to 1504; that stretch reads VDTSAGSGSAPSVLHQRNGQTED. Phosphoserine occurs at positions 1531, 1701, and 1710. Phosphoserine is present on residues Ser-2013, Ser-2025, Ser-2128, and Ser-2203. 6 disordered regions span residues 2189–2210, 2258–2285, 2403–2447, 2472–2519, 2615–2635, and 2717–3051; these read DFEGPMPSAPPEAESPLASTSK, TSSVEDCEGPVSSAVPQEEGDPSVTPAE, STEE…FAGR, EDKS…AKDP, DQASAEKTGDDNSTRKSFPEE, and VENS…KAKR. A compositionally biased stretch (low complexity) spans 2191–2207; sequence EGPMPSAPPEAESPLAS. The segment covering 2428–2439 has biased composition (basic and acidic residues); sequence AEKEEKHGKECP. Residue Ser-2475 is modified to Phosphoserine. Residues 2483 to 2492 show a composition bias toward low complexity; it reads GSSTASYSAG. Phosphoserine is present on residues Ser-2501 and Ser-2618. Basic and acidic residues-rich tracts occupy residues 2621–2633, 2724–2746, and 2754–2767; these read KTGDDNSTRKSFP, TNEEIHSESYNKGEISSGRKDNA, and VEADPKEVEEEERH. Residues 2780–2789 are compositionally biased toward acidic residues; sequence SEDEPDDNPD. Residues 2791 to 2822 are compositionally biased toward basic and acidic residues; the sequence is LDSRIETAQRQCPETEPHDTKEENSRDLEELP. Polar residues predominate over residues 2823–2834; the sequence is KTSSETNSTTSR. The span at 2848-2864 shows a compositional bias: basic and acidic residues; that stretch reads TGEKPEQNDDDTIKSQE. Over residues 2871-2880 the composition is skewed to basic residues; the sequence is IKRKRGRPRK. Residues 2872-2884 constitute a DNA-binding region (a.T hook); that stretch reads KRKRGRPRKYPVE. Residues 2896 to 2910 are compositionally biased toward polar residues; that stretch reads DTGIVTVEQSPSSSK. A phosphoserine mark is found at Ser-2905 and Ser-2907. Positions 2944 to 2953 are enriched in basic residues; it reads VRRRGRKPKR. Position 2954 is a phosphoserine (Ser-2954). Thr-2956 is modified (phosphothreonine). Phosphoserine occurs at positions 2958, 2964, and 2973. Glycyl lysine isopeptide (Lys-Gly) (interchain with G-Cter in ubiquitin) cross-links involve residues Lys-2981 and Lys-2982. The span at 2985 to 2998 shows a compositional bias: acidic residues; that stretch reads ESDEEEEEEEEDEP. Phosphoserine occurs at positions 2986 and 3019. Polar residues predominate over residues 3000 to 3020; that stretch reads GATTRSTTRSEAQRSKTQLSP. The segment covering 3039 to 3051 has biased composition (basic and acidic residues); sequence QRVEEAPVKKAKR.

It belongs to the BOD1 family. As to quaternary structure, interacts (via COMPASS-Shg1 domain) with SETD1A at stalled replication forks; this interaction mediates FANCD2-dependent nucleosome remodeling at reversed forks protecting them from nucleolytic degradation.

The protein resides in the chromosome. Component of the fork protection machinery required to protect stalled/damaged replication forks from uncontrolled DNA2-dependent resection. Acts by stabilizing RAD51 at stalled replication forks and protecting RAD51 nucleofilaments from the antirecombinogenic activities of FBH1 and BLM. Does not regulate spindle orientation. The polypeptide is Biorientation of chromosomes in cell division protein 1-like 1 (Homo sapiens (Human)).